The sequence spans 457 residues: tRNA-2-methylthio-N(6)-dimethylallyladenosine synthase (457 aa).

One can recognise an MTTase N-terminal domain in the interval 3–120 (KKVYVKTFGC…LPQMIDQRRA (118 aa)). Residues Cys-12, Cys-49, Cys-83, Cys-157, Cys-161, and Cys-164 each contribute to the [4Fe-4S] cluster site. The Radical SAM core domain maps to 143–377 (RVEGPSAFVS…QATIEENVAR (235 aa)). The TRAM domain occupies 380–447 (RSMVGKVERI…PHSLRGELLL (68 aa)).

Belongs to the methylthiotransferase family. MiaB subfamily. As to quaternary structure, monomer. The cofactor is [4Fe-4S] cluster.

The protein localises to the cytoplasm. It catalyses the reaction N(6)-dimethylallyladenosine(37) in tRNA + (sulfur carrier)-SH + AH2 + 2 S-adenosyl-L-methionine = 2-methylsulfanyl-N(6)-dimethylallyladenosine(37) in tRNA + (sulfur carrier)-H + 5'-deoxyadenosine + L-methionine + A + S-adenosyl-L-homocysteine + 2 H(+). Its function is as follows. Catalyzes the methylthiolation of N6-(dimethylallyl)adenosine (i(6)A), leading to the formation of 2-methylthio-N6-(dimethylallyl)adenosine (ms(2)i(6)A) at position 37 in tRNAs that read codons beginning with uridine. This is tRNA-2-methylthio-N(6)-dimethylallyladenosine synthase from Burkholderia ambifaria (strain ATCC BAA-244 / DSM 16087 / CCUG 44356 / LMG 19182 / AMMD) (Burkholderia cepacia (strain AMMD)).